A 211-amino-acid chain; its full sequence is Regulator of G-protein signaling 2 (211 aa).

Disordered stretches follow at residues 14-33 and 49-71; these read GPMD…REKM and LQNS…TFIK. Positions 32–66 are necessary for membrane association; sequence KMKRTLLKDWKSRLSYFLQNSSSPGKPKTGKKSKQ. The interval 79–116 is necessary to inhibit protein synthesis; that stretch reads LWSEAFDELLASKYGLAAFRAFLKSEFCEENIEFWLAC. Residues 83-199 form the RGS domain; the sequence is AFDELLASKY…LESEFYQDLC (117 aa).

In terms of assembly, interacts with GNAQ. Does not interact with GNAI1 and GNAI3. Interacts with EIF2B5. Interacts with PRKG1 (isoform alpha). Post-translationally, phosphorylated by protein kinase C. Phosphorylation by PRKG1 leads to activation of RGS2 activity.

The protein localises to the cell membrane. It is found in the cytoplasm. Its subcellular location is the nucleus. It localises to the nucleolus. In terms of biological role, regulates G protein-coupled receptor signaling cascades. Inhibits signal transduction by increasing the GTPase activity of G protein alpha subunits, thereby driving them into their inactive GDP-bound form. It is involved in the negative regulation of the angiotensin-activated signaling pathway. Plays a role in the regulation of blood pressure in response to signaling via G protein-coupled receptors and GNAQ. Plays a role in regulating the constriction and relaxation of vascular smooth muscle. Binds EIF2B5 and blocks its activity, thereby inhibiting the translation of mRNA into protein. The sequence is that of Regulator of G-protein signaling 2 (RGS2) from Bos taurus (Bovine).